A 211-amino-acid polypeptide reads, in one-letter code: Germin-like protein subfamily 3 member 3 (211 aa).

Residues 1–20 (MKMIIQIFFIISLISTISFA) form the signal peptide. A disulfide bridge links C26 with C41. The 147-residue stretch at 55-201 (TGLGTAGNTS…TTFLSDAEVK (147 aa)) folds into the Cupin type-1 domain. A glycan (N-linked (GlcNAc...) asparagine) is linked at N62. Mn(2+) is bound by residues H103, H105, and E110. S140 carries the post-translational modification Phosphoserine. H149 serves as a coordination point for Mn(2+).

It belongs to the germin family. Oligomer (believed to be a pentamer but probably hexamer). In terms of tissue distribution, expressed in leaves and flowers.

It localises to the secreted. The protein localises to the extracellular space. It is found in the apoplast. In terms of biological role, may play a role in plant defense. Probably has no oxalate oxidase activity even if the active site is conserved. In Arabidopsis thaliana (Mouse-ear cress), this protein is Germin-like protein subfamily 3 member 3 (GER3).